The sequence spans 318 residues: Mitochondrial thiamine pyrophosphate carrier (318 aa).

3 Solcar repeats span residues 13–106 (NSKL…LTEL), 116–202 (HQFS…LKRA), and 214–309 (TGNL…FCNL). The next 6 membrane-spanning stretches (helical) occupy residues 19–39 (AVAG…LDVI), 87–107 (ILSI…TELL), 122–142 (FVCG…VDVL), 173–193 (VFYK…GLQF), 220–240 (LLCG…LDLF), and 293–313 (ALST…FHCI).

The protein belongs to the mitochondrial carrier (TC 2.A.29) family.

The protein localises to the mitochondrion membrane. It carries out the reaction thiamine phosphate(out) + thiamine diphosphate(in) = thiamine phosphate(in) + thiamine diphosphate(out). Its function is as follows. Mitochondrial transporter mediating uptake of thiamine diphosphate into mitochondria. It is not clear if the antiporter activity is affected by the membrane potential or by the proton electrochemical gradient. The polypeptide is Mitochondrial thiamine pyrophosphate carrier (Slc25a19) (Rattus norvegicus (Rat)).